The primary structure comprises 328 residues: C-type lectin domain family 4 member K (328 aa).

The Cytoplasmic portion of the chain corresponds to 1-43; the sequence is MTVEKEAPDAHFTVDKQNISLWPREPPPKSGPSLVPGKTPTVR. The helical; Signal-anchor for type II membrane protein transmembrane segment at 44–64 threads the bilayer; it reads AALICLTLVLVASVLLQAVLY. At 65-328 the chain is on the extracellular side; the sequence is PRFMGTISDV…CKRPYVPSEP (264 aa). Asparagine 87, asparagine 113, and asparagine 180 each carry an N-linked (GlcNAc...) asparagine glycan. Residues 145-190 are a coiled coil; sequence EEVSTLNAQIPELKSDLEKASALNTKIRALQGSLENMSKLLKRQND. One can recognise a C-type lectin domain in the interval 202 to 320; that stretch reads FKGNFYYFSL…CDKTFLFICK (119 aa). Cystine bridges form between cysteine 223-cysteine 319 and cysteine 295-cysteine 311.

Homotrimer. In terms of tissue distribution, exclusively expressed by Langerhans cells. Expressed in astrocytoma and malignant ependymoma, but not in normal brain tissues.

Its subcellular location is the membrane. Calcium-dependent lectin displaying mannose-binding specificity. Induces the formation of Birbeck granules (BGs); is a potent regulator of membrane superimposition and zippering. Binds to sulfated as well as mannosylated glycans, keratan sulfate (KS) and beta-glucans. Facilitates uptake of antigens and is involved in the routing and/or processing of antigen for presentation to T cells. Major receptor on primary Langerhans cells for Candida species, Saccharomyces species, and Malassezia furfur. Protects against human immunodeficiency virus-1 (HIV-1) infection. Binds to high-mannose structures present on the envelope glycoprotein which is followed by subsequent targeting of the virus to the Birbeck granules leading to its rapid degradation. This chain is C-type lectin domain family 4 member K (CD207), found in Homo sapiens (Human).